Reading from the N-terminus, the 617-residue chain is Probable Xaa-Pro aminopeptidase P (617 aa).

Mn(2+) is bound by residues D414, D425, E523, and E537.

It belongs to the peptidase M24B family. Mn(2+) serves as cofactor.

It carries out the reaction Release of any N-terminal amino acid, including proline, that is linked to proline, even from a dipeptide or tripeptide.. Catalyzes the removal of a penultimate prolyl residue from the N-termini of peptides. This is Probable Xaa-Pro aminopeptidase P (AMPP) from Ajellomyces capsulatus (strain G186AR / H82 / ATCC MYA-2454 / RMSCC 2432) (Darling's disease fungus).